We begin with the raw amino-acid sequence, 702 residues long: Putative methyltransferase NSUN7 (702 aa).

C424 acts as the Nucleophile in catalysis. Disordered stretches follow at residues 522 to 541 (KSSK…TKAA), 567 to 593 (ETVT…KHKL), and 675 to 702 (PTPS…RRWL). Residues 523 to 534 (SSKREKKKKKSK) show a composition bias toward basic residues. Residues 567–587 (ETVTKPSLPQKNTAQVGASSQ) are compositionally biased toward polar residues. Residues 681–691 (RKGEKPKDDTR) show a composition bias toward basic and acidic residues.

It belongs to the class I-like SAM-binding methyltransferase superfamily. RsmB/NOP family.

Its function is as follows. May have S-adenosyl-L-methionine-dependent methyl-transferase activity. The polypeptide is Putative methyltransferase NSUN7 (NSUN7) (Macaca fascicularis (Crab-eating macaque)).